The primary structure comprises 221 residues: Urease accessory protein UreF (221 aa).

This sequence belongs to the UreF family. UreD, UreF and UreG form a complex that acts as a GTP-hydrolysis-dependent molecular chaperone, activating the urease apoprotein by helping to assemble the nickel containing metallocenter of UreC. The UreE protein probably delivers the nickel.

It is found in the cytoplasm. In terms of biological role, required for maturation of urease via the functional incorporation of the urease nickel metallocenter. This Vibrio parahaemolyticus protein is Urease accessory protein UreF.